A 502-amino-acid polypeptide reads, in one-letter code: Cytochrome P450 81D1 (502 aa).

A helical membrane pass occupies residues 6-26 (IRVVLYSIFSLIFLIISFKFL). C440 is a heme binding site.

Belongs to the cytochrome P450 family. Requires heme as cofactor.

It localises to the membrane. In Arabidopsis thaliana (Mouse-ear cress), this protein is Cytochrome P450 81D1 (CYP81D1).